The sequence spans 212 residues: uncharacterized protein (212 aa).

Disordered stretches follow at residues 1 to 148 (MEKD…LNDL) and 168 to 190 (EVVT…LSED). Residues 61–70 (KELESEDQGK) show a composition bias toward basic and acidic residues. A compositionally biased stretch (polar residues) spans 71 to 85 (DPSSNAEDASCQKNL). Composition is skewed to basic and acidic residues over residues 99–115 (LGHE…KSDL), 124–144 (EGEH…ESIK), and 168–180 (EVVT…EKPS).

This is an uncharacterized protein from Homo sapiens (Human).